The primary structure comprises 393 residues: Matrix metalloproteinase-23 (393 aa).

The Cytoplasmic portion of the chain corresponds to 1–20 (MGRGACVPSAASGAGDRARQ). The propeptide occupies 1-81 (MGRGACVPSA…PHPPVPRRRR (81 aa)). A helical; Signal-anchor for type II membrane protein transmembrane segment spans residues 21 to 41 (LGAVLGALCLFPALVLLAWPG). Residues 42–393 (TPANGAGARV…TYSWRIRVRS (352 aa)) lie on the Lumenal side of the membrane. The segment at 60-79 (TSGVLASGSLGPPHPPVPRR) is disordered. 2 N-linked (GlcNAc...) asparagine glycosylation sites follow: N95 and N151. H214 serves as a coordination point for Zn(2+). Residue E215 is part of the active site. 2 residues coordinate Zn(2+): H218 and H224. An N-linked (GlcNAc...) asparagine glycan is attached at N235. Residues 258–292 (CLDRLFVCASWARRGFCDTRRRLMKRLCPSSCDFC) enclose the ShKT domain. 3 cysteine pairs are disulfide-bonded: C258-C292, C265-C285, and C274-C289. Positions 298–383 (PTVAATPPPP…VVRRRQRVLS (86 aa)) constitute an Ig-like C2-type domain. N319 carries an N-linked (GlcNAc...) asparagine glycan. A disulfide bridge links C324 with C373.

Belongs to the peptidase M10A family. It depends on Zn(2+) as a cofactor. Post-translationally, N-glycosylated. Proteolytic cleavage might yield an active form.

It is found in the membrane. The protein resides in the endoplasmic reticulum membrane. In terms of biological role, protease. May regulate the surface expression of some potassium channels by retaining them in the endoplasmic reticulum. The polypeptide is Matrix metalloproteinase-23 (MMP23) (Bos taurus (Bovine)).